A 284-amino-acid polypeptide reads, in one-letter code: D-tagatose-1,6-bisphosphate aldolase subunit GatY (284 aa).

Aspartate 82 functions as the Proton donor in the catalytic mechanism. Residues histidine 83 and histidine 180 each contribute to the Zn(2+) site. Glycine 181 lines the dihydroxyacetone phosphate pocket. Histidine 208 is a binding site for Zn(2+). Dihydroxyacetone phosphate-binding positions include 209–211 (GAS) and 230–233 (NVAT).

Belongs to the class II fructose-bisphosphate aldolase family. TagBP aldolase GatY subfamily. Forms a complex with GatZ. It depends on Zn(2+) as a cofactor.

It catalyses the reaction D-tagatofuranose 1,6-bisphosphate = D-glyceraldehyde 3-phosphate + dihydroxyacetone phosphate. Its pathway is carbohydrate metabolism; D-tagatose 6-phosphate degradation; D-glyceraldehyde 3-phosphate and glycerone phosphate from D-tagatose 6-phosphate: step 2/2. Its function is as follows. Catalytic subunit of the tagatose-1,6-bisphosphate aldolase GatYZ, which catalyzes the reversible aldol condensation of dihydroxyacetone phosphate (DHAP or glycerone-phosphate) with glyceraldehyde 3-phosphate (G3P) to produce tagatose 1,6-bisphosphate (TBP). Requires GatZ subunit for full activity and stability. Is involved in the catabolism of galactitol. In Escherichia coli O6:H1 (strain CFT073 / ATCC 700928 / UPEC), this protein is D-tagatose-1,6-bisphosphate aldolase subunit GatY.